A 1331-amino-acid chain; its full sequence is DNA replication ATP-dependent helicase/nuclease JHS1 (1331 aa).

Residues M1–S98 are disordered. Positions P2 to K8 match the Nuclear localization signal motif. A compositionally biased stretch (polar residues) spans A11 to I31. Residues Q40–T52 are compositionally biased toward low complexity. The span at D57–N81 shows a compositional bias: polar residues. Residues E82 to D91 are compositionally biased toward basic and acidic residues. A nuclease activity region spans residues E362 to I811. Residues C422, C666, C669, and C675 each coordinate [4Fe-4S] cluster. The segment at L812 to P1331 is helicase activity. One can recognise a UvrD-like helicase ATP-binding domain in the interval N924–S1271. G945 to T952 serves as a coordination point for ATP.

The protein belongs to the DNA2/NAM7 helicase family. The cofactor is [4Fe-4S] cluster. In terms of tissue distribution, strongly expressed in meristems, including both root and shoot apical meristems (RAM and SAM). Also present in the vasculature and in young floral tissues.

Its subcellular location is the nucleus. The protein resides in the chromosome. It catalyses the reaction ATP + H2O = ADP + phosphate + H(+). Its function is as follows. Essential protein required during embryogenesis. Key enzyme involved in DNA replication and damage repair, shoot apical meristem (SAM) maintenance, and development. Involved in Okazaki fragments processing. Possesses different enzymatic activities, such as single-stranded DNA (ssDNA)-dependent ATPase, 5'-3' helicase and endonuclease activities. While the ATPase and endonuclease activities are well-defined and play a key role in Okazaki fragments processing and DSB repair, the 5'-3' DNA helicase activity is atypical: it cannot load onto its tracking strand internally and has an absolute free 5'-end requirement. This is DNA replication ATP-dependent helicase/nuclease JHS1 from Arabidopsis thaliana (Mouse-ear cress).